A 579-amino-acid chain; its full sequence is Aspartate--tRNA(Asp/Asn) ligase (579 aa).

E169 lines the L-aspartate pocket. Residues Q193–K196 form an aspartate region. R215 is an L-aspartate binding site. Residues R215–E217 and Q224 each bind ATP. H437 provides a ligand contact to L-aspartate. E471 lines the ATP pocket. An L-aspartate-binding site is contributed by R478. An ATP-binding site is contributed by G523 to R526. A disordered region spans residues D551–S579.

Belongs to the class-II aminoacyl-tRNA synthetase family. Type 1 subfamily. Homodimer.

It is found in the cytoplasm. It catalyses the reaction tRNA(Asx) + L-aspartate + ATP = L-aspartyl-tRNA(Asx) + AMP + diphosphate. In terms of biological role, aspartyl-tRNA synthetase with relaxed tRNA specificity since it is able to aspartylate not only its cognate tRNA(Asp) but also tRNA(Asn). Reaction proceeds in two steps: L-aspartate is first activated by ATP to form Asp-AMP and then transferred to the acceptor end of tRNA(Asp/Asn). The sequence is that of Aspartate--tRNA(Asp/Asn) ligase from Thermobifida fusca (strain YX).